A 513-amino-acid chain; its full sequence is MQLNSTEISELIKQRIAQFDVVSEAHNEGTIVSVSDGIIRVHGLADVMQGEMIALPGNRYAIALNLERDSVGAVVMGPYADLAEGMKVKCTGRILEVPVGRGLLGRVVNTLGEPIDGKGPVEHDGFSAVEAIAPGVIERQSVDQPVQTGYKSVDAMIPIGRGQRELVIGDRQTGKTALAVDAIINQRDSGIKCIYVAVGQKASTIANVVRKLEEHGALANTIVVVASASESAALQYLAPYAGCAMGEYFRDRGEDALIIYDDLSKQAVAYRQISLLLRRPPGREAFPGDVFYLHSRLLERAARVNAEYVETFTKGEVKGKTGSLTALPIIETQAGDVSAFVPTNVISITDGQIFLESNLFNAGIRPAVNPGISVSRVGGAAQTKIMKKLSGGIRTALAQYRELAAFSQFASDLDDATRKQLSHGQKVTELLKQKQYAPMSVATQSLVLFAAERGYLEDVELAKVGGFEAALMAYVDREHADLMQQINQTGAYNDEIEGKLKGILDTFKATQSW.

169-176 (GDRQTGKT) lines the ATP pocket.

It belongs to the ATPase alpha/beta chains family. In terms of assembly, F-type ATPases have 2 components, CF(1) - the catalytic core - and CF(0) - the membrane proton channel. CF(1) has five subunits: alpha(3), beta(3), gamma(1), delta(1), epsilon(1). CF(0) has three main subunits: a(1), b(2) and c(9-12). The alpha and beta chains form an alternating ring which encloses part of the gamma chain. CF(1) is attached to CF(0) by a central stalk formed by the gamma and epsilon chains, while a peripheral stalk is formed by the delta and b chains.

The protein localises to the cell inner membrane. The enzyme catalyses ATP + H2O + 4 H(+)(in) = ADP + phosphate + 5 H(+)(out). Functionally, produces ATP from ADP in the presence of a proton gradient across the membrane. The alpha chain is a regulatory subunit. The chain is ATP synthase subunit alpha from Edwardsiella ictaluri (strain 93-146).